The primary structure comprises 447 residues: MTKRVTIIDVKDYVGQEVTIGAWVANKSGKGKIAFLQLRDGTAFFQGVAFKPNFVEKFGEEVGLEKFDVIKRLSQETSVYVTGIVKEDERSKFGYELDITDIEVIGESQDYPITPKEHGTDFLMDNRHLWLRSRKQVAVLQIRNAIIYATYEFFDKNGFMKFDSPILSGNAAEDSTELFETDYFGTPAYLSQSGQLYLEAGAMALGRVFDFGPVFRAEKSKTRRHLTEFWMMDAEYSYLTHDESLDLQEAYVKALLQGVLDRAPQALETLERDTELLKRYIAEPFKRITYDQAIDLLQEHENDEDADYEHLEHGDDFGSPHETWISNHFGVPTFVMNYPAAIKAFYMKPVPGNPERVLCADLLAPEGYGEIIGGSMREEDYDALVAKMDELGMDRTEYEFYLDLRKYGTVPHGGFGIGIERMVTFAAGTKHIREAIPFPRMLHRIKP.

The protein belongs to the class-II aminoacyl-tRNA synthetase family. Homodimer.

It localises to the cytoplasm. It catalyses the reaction tRNA(Asn) + L-asparagine + ATP = L-asparaginyl-tRNA(Asn) + AMP + diphosphate + H(+). The sequence is that of Asparagine--tRNA ligase from Streptococcus pneumoniae serotype 4 (strain ATCC BAA-334 / TIGR4).